An 832-amino-acid polypeptide reads, in one-letter code: Cadherin-like protein 26 (832 aa).

The signal sequence occupies residues 1-27 (MAMRSGRHPSLLLLLVLLLWLLQVSII). Topologically, residues 28 to 614 (DSVQQETDDL…ELADAEVGLH (587 aa)) are extracellular. Cadherin domains lie at 35 to 165 (DDLT…APQF), 166 to 275 (PEKE…RPAF), 276 to 396 (TQEN…PPAF), and 397 to 500 (HPQS…VPTL). 4 N-linked (GlcNAc...) asparagine glycosylation sites follow: asparagine 81, asparagine 85, asparagine 171, and asparagine 177. Asparagine 462 is a glycosylation site (N-linked (GlcNAc...) asparagine). Residues 615–635 (VGALFPVCAAFVALAVALLFL) form a helical membrane-spanning segment. Residues 636–832 (LRCYFVLEPK…EIYSESGVPS (197 aa)) lie on the Cytoplasmic side of the membrane. Residues 813 to 832 (SLGSKATPFEEIYSESGVPS) are disordered.

As to quaternary structure, homodimer. Component of a cadherin:catenin adhesion complex composed of at least of CDH26, beta-catenin/CTNNB1, alpha-catenin/CTNNA1 and p120 catenin/CTNND1. In terms of processing, N-glycosylated. Expressed by epithelial cells of gastrointestinal tissue.

It localises to the cell membrane. Functionally, cadherins are calcium-dependent cell adhesion proteins. They preferentially interact with themselves in a homophilic manner in connecting cells; cadherins may thus contribute to the sorting of heterogeneous cell types. Ligand for integrins alpha-E/beta-7, ITGAE:ITGAB7, alpha-4/beta-7, ITGA4:ITGAB7 and alpha-4/beta-1, ITGA4:ITGAB1 through which modulates CD4(+) T cells activation. The chain is Cadherin-like protein 26 (CDH26) from Homo sapiens (Human).